Consider the following 218-residue polypeptide: Large ribosomal subunit protein uL4 (218 aa).

Residues Thr-55 to Gly-83 form a disordered region.

This sequence belongs to the universal ribosomal protein uL4 family. In terms of assembly, part of the 50S ribosomal subunit.

Its function is as follows. One of the primary rRNA binding proteins, this protein initially binds near the 5'-end of the 23S rRNA. It is important during the early stages of 50S assembly. It makes multiple contacts with different domains of the 23S rRNA in the assembled 50S subunit and ribosome. Functionally, forms part of the polypeptide exit tunnel. In Bifidobacterium longum (strain DJO10A), this protein is Large ribosomal subunit protein uL4.